Consider the following 453-residue polypeptide: Flavonol-3-O-rhamnosyltransferase (453 aa).

The Proton acceptor role is filled by His-24. His-24 serves as a coordination point for an anthocyanidin. The active-site Charge relay is the Asp-119. Position 150 (His-150) interacts with an anthocyanidin. The UDP-beta-L-rhamnose site is built by Thr-280, Ala-333, His-350, Asn-354, Ser-355, and Glu-358. Ala-373 is a binding site for an anthocyanidin.

This sequence belongs to the UDP-glycosyltransferase family. Expressed in leaves, flowers, siliques, and stems. Expressed in the shoot apex.

It carries out the reaction kaempferol + UDP-beta-L-rhamnose = kaempferol 3-O-alpha-L-rhamnoside + UDP + H(+). It catalyses the reaction UDP-beta-L-rhamnose + quercetin = quercitrin + UDP + H(+). The protein operates within flavonoid metabolism. Its function is as follows. Flavonol 3-O-rhamnosyltransferase that catalyzes the transfer of rhamnose from UDP-rhamnose to the 3-OH position of kaempferol and quercetin. Possesses low quercetin 3-O-glucosyltransferase activity in vitro. The protein is Flavonol-3-O-rhamnosyltransferase of Arabidopsis thaliana (Mouse-ear cress).